The sequence spans 371 residues: 4-hydroxy-3-methylbut-2-en-1-yl diphosphate synthase (flavodoxin) (371 aa).

Residues C269, C272, C304, and E311 each coordinate [4Fe-4S] cluster.

This sequence belongs to the IspG family. Requires [4Fe-4S] cluster as cofactor.

It catalyses the reaction (2E)-4-hydroxy-3-methylbut-2-enyl diphosphate + oxidized [flavodoxin] + H2O + 2 H(+) = 2-C-methyl-D-erythritol 2,4-cyclic diphosphate + reduced [flavodoxin]. Its pathway is isoprenoid biosynthesis; isopentenyl diphosphate biosynthesis via DXP pathway; isopentenyl diphosphate from 1-deoxy-D-xylulose 5-phosphate: step 5/6. In terms of biological role, converts 2C-methyl-D-erythritol 2,4-cyclodiphosphate (ME-2,4cPP) into 1-hydroxy-2-methyl-2-(E)-butenyl 4-diphosphate. The sequence is that of 4-hydroxy-3-methylbut-2-en-1-yl diphosphate synthase (flavodoxin) from Acinetobacter baylyi (strain ATCC 33305 / BD413 / ADP1).